A 278-amino-acid polypeptide reads, in one-letter code: Undecaprenyl-diphosphatase (278 aa).

Transmembrane regions (helical) follow at residues 3 to 23 (YILIGVILGIVQGISEWIPIS), 42 to 62 (VAYSFGLFMEIGTIAAAIFYF), 88 to 108 (FLVIVTIITGLVGVPLYLFVI), 112 to 132 (ILGLPMTVLGVVLLIDGIVIY), 152 to 172 (IIIVGIAQGLAALPGVSRSGM), 190 to 210 (LSFISLIPAALGAISVTVLFS), 225 to 245 (GLLISIVVATFVSIFFINALL), and 253 to 273 (VVLLVIILGIMAIISGILSDI).

The protein belongs to the UppP family.

Its subcellular location is the cell membrane. The enzyme catalyses di-trans,octa-cis-undecaprenyl diphosphate + H2O = di-trans,octa-cis-undecaprenyl phosphate + phosphate + H(+). In terms of biological role, catalyzes the dephosphorylation of undecaprenyl diphosphate (UPP). The polypeptide is Undecaprenyl-diphosphatase (Saccharolobus solfataricus (strain ATCC 35092 / DSM 1617 / JCM 11322 / P2) (Sulfolobus solfataricus)).